Consider the following 325-residue polypeptide: L-lactate dehydrogenase (325 aa).

NAD(+) contacts are provided by residues V19, D40, K45, Y70, and 84–85 (GA). Residues Q87 and R93 each coordinate substrate. Residues T106, 123–125 (AAN), and S148 each bind NAD(+). Position 125–128 (125–128 (NPVD)) interacts with substrate. 153–156 (DSAR) is a substrate binding site. R158 and H173 together coordinate beta-D-fructose 1,6-bisphosphate. Catalysis depends on H180, which acts as the Proton acceptor. Y225 is subject to Phosphotyrosine. T234 lines the substrate pocket.

Belongs to the LDH/MDH superfamily. LDH family. In terms of assembly, homotetramer.

Its subcellular location is the cytoplasm. The enzyme catalyses (S)-lactate + NAD(+) = pyruvate + NADH + H(+). The protein operates within fermentation; pyruvate fermentation to lactate; (S)-lactate from pyruvate: step 1/1. With respect to regulation, allosterically activated by fructose 1,6-bisphosphate (FBP). Functionally, catalyzes the conversion of lactate to pyruvate. The chain is L-lactate dehydrogenase from Latilactobacillus sakei subsp. sakei (strain 23K) (Lactobacillus sakei subsp. sakei).